Consider the following 586-residue polypeptide: BTB/POZ domain and ankyrin repeat-containing protein NPR1 (586 aa).

The 77-residue stretch at 63–139 folds into the BTB domain; that stretch reads SDADIVVEGI…VYTGKLKPSP (77 aa). Residues 142 to 156 form a C2HC NPR-type zinc finger; the sequence is VSTCVHNVCAHDACR. 4 residues coordinate Zn(2+): Cys-145, Cys-150, His-152, and Cys-155. ANK repeat units lie at residues 266 to 296, 298 to 325, and 329 to 358; these read KRIR…TLDE, NALH…DVNL, and RGYT…RASE. The segment at 388-522 is salicylic acid-binding core (SBC); the sequence is EANKDRICID…LDKFIDDDLP (135 aa). Residue Arg-433 coordinates salicylate. The tract at residues 561–586 is disordered; it reads NLSGLSSSSSTTSPEKIGANQKVREP. The span at 562 to 573 shows a compositional bias: low complexity; that stretch reads LSGLSSSSSTTS.

This sequence belongs to the plant 'ANKYRIN-BTB/POZ' family. 'NPR1-like' subfamily. Highly expressed in leaves. Expressed at low levels in roots and stems.

Its subcellular location is the cytoplasm. The protein resides in the nucleus. The protein localises to the nuclear body. It functions in the pathway protein modification; protein ubiquitination. Its function is as follows. Salicylic acid (SA)-binding substrate-specific adapter of an E3 ubiquitin-protein ligase complex (CUL3-RBX1-BTB) which mediates the ubiquitination and subsequent proteasomal degradation of target proteins. Transcription cofactor that represses gene expression in the absence of salicylic acid (SA), when attached to negative cis-elements (W-box) with WRKY transcription factors, but stimulates gene expression upon activation by SA, when sumoylated and attached to positive cis-elements (as-1) with TGA transcription factors, thus confering immunity through a series of gene regulations ending in a significant increase in antimicrobial and defense genes expression. Probable component of the salicylic acid (SA) defense signaling pathway and pathogen-induced systemic acquired resistance (SAR). May be involved in disease resistance against fungal pathogens. May be involved in tolerance to salt and osmotic stresses. The chain is BTB/POZ domain and ankyrin repeat-containing protein NPR1 from Malus hupehensis (Chinese crab apple).